An 834-amino-acid polypeptide reads, in one-letter code: Periplasmic nitrate reductase (834 aa).

Positions Met-1–Ala-29 form a signal peptide, tat-type signal. The 4Fe-4S Mo/W bis-MGD-type domain occupies Leu-41–Asp-97. [4Fe-4S] cluster contacts are provided by Cys-48, Cys-51, Cys-55, and Cys-83. Mo-bis(molybdopterin guanine dinucleotide) is bound by residues Lys-85, Gln-152, Asn-177, Cys-181, Trp-214–Met-221, Ser-245–His-249, Gln-264–Asp-266, Met-375, Gln-379, Asn-485, Ser-511–Asp-512, Lys-534, Asp-561, and Thr-721–Thr-730. A substrate-binding site is contributed by Phe-797. Mo-bis(molybdopterin guanine dinucleotide) contacts are provided by Asn-805 and Lys-822.

Belongs to the prokaryotic molybdopterin-containing oxidoreductase family. NasA/NapA/NarB subfamily. Component of the periplasmic nitrate reductase NapAB complex composed of NapA and NapB. It depends on [4Fe-4S] cluster as a cofactor. Mo-bis(molybdopterin guanine dinucleotide) serves as cofactor. In terms of processing, predicted to be exported by the Tat system. The position of the signal peptide cleavage has not been experimentally proven.

It is found in the periplasm. It carries out the reaction 2 Fe(II)-[cytochrome] + nitrate + 2 H(+) = 2 Fe(III)-[cytochrome] + nitrite + H2O. Catalytic subunit of the periplasmic nitrate reductase complex NapAB. Receives electrons from NapB and catalyzes the reduction of nitrate to nitrite. This is Periplasmic nitrate reductase from Ectopseudomonas mendocina (strain ymp) (Pseudomonas mendocina).